The following is a 595-amino-acid chain: MSSQLKSTWAPVPSTKPSQPCKIGTDFKGERIVYPANKAIIIREIEKQENCFQYNEHTAPTTVARFSPSGYYVASGDNQGNVRIWDCAGEDKILKNQVTAISGRITDLDWDGDSQRIIAVGEGKERYGHAFTADSGNSVGEIFGHSSVVNAVSLRKSRPFRAATASDDNSINFFHGTPYRFNRSLRVHSKFVYDVRYSPNDERFASAGADGKVYVFDGKTGDQVYEIDAHKGSIFSISWSPDSSQFVTSSAGYSCKIWDANTGSLIREWLSSDKKQLVGTVWPTKDLIIVVNSKGNLTYLNPSDCKVIDTIYGHQRSITAATLSPDATHFYTASYDGTVLSWDIGKQKAFPLVGESHTNQVMQMIMADDHVITIGMDDTLRVIDIKQGCFAKDNVFPTGYQPIGVCSVEDCLILVTVSDIQVLRSLTGVSTAKTIYQPSAVASHPLKSEFCVGGEDCCVYIHTLEKGELCEVAQCKDSTAPITCLAYSPDGKYLACGDASGKVVLYDANSREVITSRWAFHTGRILGMSWNAKSTHLATASLDTNIHIYSVERPMKYIAMKNAHSLGATQVEWVSENELLSTGSDAAIKVWSVTF.

The segment at 1-21 is disordered; sequence MSSQLKSTWAPVPSTKPSQPC. 11 WD repeats span residues 56–95, 100–143, 144–184, 187–226, 229–268, 313–352, 356–393, 433–472, 477–516, 520–559, and 564–594; these read EHTA…KILK, AISG…GEIF, GHSS…FNRS, VHSK…QVYE, AHKG…LIRE, GHQR…AFPL, SHTN…FAKD, KTIY…LCEV, DSTA…VITS, FHTG…KYIA, and HSLG…WSVT.

This sequence belongs to the WD repeat AIP1 family.

This is an uncharacterized protein from Schizosaccharomyces pombe (strain 972 / ATCC 24843) (Fission yeast).